The following is a 501-amino-acid chain: Acetyl-coenzyme A carboxylase carboxyl transferase subunit beta, chloroplastic (501 aa).

The region spanning 231–501 (LWIECENCYG…LIQNEKESRS (271 aa)) is the CoA carboxyltransferase N-terminal domain. Zn(2+) contacts are provided by Cys235, Cys238, Cys254, and Cys257. A C4-type zinc finger spans residues 235–257 (CENCYGLNYKKILKSKMNICEHC).

It belongs to the AccD/PCCB family. In terms of assembly, acetyl-CoA carboxylase is a heterohexamer composed of biotin carboxyl carrier protein, biotin carboxylase and 2 subunits each of ACCase subunit alpha and ACCase plastid-coded subunit beta (accD). Requires Zn(2+) as cofactor.

It is found in the plastid. It localises to the chloroplast stroma. It catalyses the reaction N(6)-carboxybiotinyl-L-lysyl-[protein] + acetyl-CoA = N(6)-biotinyl-L-lysyl-[protein] + malonyl-CoA. It participates in lipid metabolism; malonyl-CoA biosynthesis; malonyl-CoA from acetyl-CoA: step 1/1. Component of the acetyl coenzyme A carboxylase (ACC) complex. Biotin carboxylase (BC) catalyzes the carboxylation of biotin on its carrier protein (BCCP) and then the CO(2) group is transferred by the transcarboxylase to acetyl-CoA to form malonyl-CoA. In Lotus japonicus (Lotus corniculatus var. japonicus), this protein is Acetyl-coenzyme A carboxylase carboxyl transferase subunit beta, chloroplastic.